A 433-amino-acid polypeptide reads, in one-letter code: Evolutionarily conserved signaling intermediate in Toll pathway, mitochondrial (433 aa).

The transit peptide at 1–48 (MSWAQAILLARGASRGWGGICSTALTGAPFSQVPPQAPRGLRCSAAAH) directs the protein to the mitochondrion. Positions 36–63 (QAPRGLRCSAAAHNPDSSLVPHPPEPPR) are disordered. Lysine 372 participates in a covalent cross-link: Glycyl lysine isopeptide (Lys-Gly) (interchain with G-Cter in ubiquitin). The segment at 397 to 433 (SGELLPSSSELEEPPPPPPEGQEEEEDSQQRQQQGQS) is disordered.

It belongs to the ECSIT family. As to quaternary structure, interacts with MAP3K1, SMAD4 and TRAF6. Interacts with SMAD1 only after BMP4-treatment. Part of the mitochondrial complex I assembly/MCIA complex that comprises at least the core subunits TMEM126B, NDUFAF1, ECSIT and ACAD9 and complement subunits such as COA1 and TMEM186. Interacts with NDUFAF1. Interacts with ACAD9. Interacts with TRIM59. Interacts with TMEM70 and TMEM242. Interacts (when ubiquitinated) with NF-kappa-B subunits RELA and NFKB1. Interacts with RIGI, IFIT1 and MAVS; these interactions promote RLR-mediated type I IFN induction. Interacts with SQSTM1; this interaction inhibits TLR4 signaling via functional regulation of the TRAF6-ECSIT complex. Interacts with cereblon/CRBN; this interaction inhibits the ubiquitination of ECSIT. In terms of processing, ubiquitinated on Lys-372; leading to translocation in the nucleus together with RELA and NFKB1 and expression of NF-kappa-B-dependent genes.

The protein localises to the cytoplasm. The protein resides in the nucleus. It localises to the mitochondrion. Adapter protein that plays a role in different signaling pathways including TLRs and IL-1 pathways or innate antiviral induction signaling. Plays a role in the activation of NF-kappa-B by forming a signal complex with TRAF6 and TAK1/MAP3K7 to activate TAK1/MAP3K7 leading to activation of IKKs. Once ubiquitinated, interacts with the dissociated RELA and NFKB1 proteins and translocates to the nucleus where it induces NF-kappa-B-dependent gene expression. Plays a role in innate antiviral immune response by bridging the pattern recognition receptors RIGI and MDA5/IFIT1 to the MAVS complex at the mitochondrion. Promotes proteolytic activation of MAP3K1. Involved in the BMP signaling pathway. Required for normal embryonic development. Functionally, as part of the MCIA complex, involved in the assembly of the mitochondrial complex I. This Bos taurus (Bovine) protein is Evolutionarily conserved signaling intermediate in Toll pathway, mitochondrial.